The sequence spans 308 residues: Eugenol synthase 1 (308 aa).

NADP(+) contacts are provided by residues 13-16, 35-45, Arg36, 86-88, 111-113, Lys133, and 153-155; these read TGYI, VRESTVSDPAK, QMQ, SEF, and NCF. Lys133 functions as the Proton donor/acceptor in the catalytic mechanism.

The protein belongs to the NmrA-type oxidoreductase family. In terms of tissue distribution, in flowers, mostly expressed in limbs, and, to a lower extent, in tubes.

The catalysed reaction is eugenol + a carboxylate + NADP(+) = a coniferyl ester + NADPH. It catalyses the reaction eugenol + acetate + NADP(+) = (E)-coniferyl acetate + NADPH. The protein operates within aromatic compound metabolism; phenylpropanoid biosynthesis. Its function is as follows. Involved in the biosynthesis of the floral volatile eugenol. Catalyzes the synthesis of the phenylpropene eugenol from coniferyl acetate. Phenylpropenes are produced by plants as defense compounds with antimicrobial and antianimal properties, or as floral attractants of pollinators. The polypeptide is Eugenol synthase 1 (Petunia hybrida (Petunia)).